The primary structure comprises 936 residues: Protocadherin alpha-5 (936 aa).

The signal sequence occupies residues 1-28; the sequence is MVYSRRGSLGSRLLLLWLLLAYWKAGSG. The Extracellular portion of the chain corresponds to 29 to 696; the sequence is QLHYSIPEEA…GPEAALVDVN (668 aa). Cadherin domains lie at 33 to 132, 156 to 241, 242 to 349, 350 to 454, 455 to 564, and 580 to 677; these read SIPE…PPRF, ASDL…APEF, DKSI…TPEM, AITT…APAF, AQPQ…APAL, and VPRS…APKA. Asn264 carries an N-linked (GlcNAc...) asparagine glycan. An N-linked (GlcNAc...) asparagine glycan is attached at Asn547. The helical transmembrane segment at 697 to 717 threads the bilayer; it reads VYLIIAICAVSSLLVLTLLLY. The Cytoplasmic portion of the chain corresponds to 718 to 936; that stretch reads TALRCSAQPT…GNSTTDNSDQ (219 aa). Disordered regions lie at residues 759-793 and 816-936; these read SGEA…PDWR and AGPG…NSDQ. PXXP repeat units lie at residues 773–776, 785–788, 818–821, 873–876, and 877–890; these read PSLP, PRQP, PGGP, KFII, and PGSP…QEPT. Residues 773 to 890 form a 5 X 4 AA repeats of P-X-X-P region; it reads PSLPQGPTST…AIISIRQEPT (118 aa). Residues 774-786 are compositionally biased toward polar residues; sequence SLPQGPTSTDNPR. Basic and acidic residues predominate over residues 895-909; the sequence is DKSDFITFGKKEETK.

Its subcellular location is the cell membrane. Potential calcium-dependent cell-adhesion protein. May be involved in the establishment and maintenance of specific neuronal connections in the brain. In Homo sapiens (Human), this protein is Protocadherin alpha-5 (PCDHA5).